The primary structure comprises 220 residues: Deoxyribose-phosphate aldolase 1 (220 aa).

Catalysis depends on aspartate 89, which acts as the Proton donor/acceptor. Lysine 151 serves as the catalytic Schiff-base intermediate with acetaldehyde. The active-site Proton donor/acceptor is lysine 180.

This sequence belongs to the DeoC/FbaB aldolase family. DeoC type 1 subfamily.

It is found in the cytoplasm. It carries out the reaction 2-deoxy-D-ribose 5-phosphate = D-glyceraldehyde 3-phosphate + acetaldehyde. It participates in carbohydrate degradation; 2-deoxy-D-ribose 1-phosphate degradation; D-glyceraldehyde 3-phosphate and acetaldehyde from 2-deoxy-alpha-D-ribose 1-phosphate: step 2/2. Functionally, catalyzes a reversible aldol reaction between acetaldehyde and D-glyceraldehyde 3-phosphate to generate 2-deoxy-D-ribose 5-phosphate. The chain is Deoxyribose-phosphate aldolase 1 from Staphylococcus aureus (strain bovine RF122 / ET3-1).